Here is a 199-residue protein sequence, read N- to C-terminus: TATA-box-binding protein (199 aa).

Repeat copies occupy residues 10–86 (IENI…VKLL) and 101–177 (IQNI…YNQL).

The protein belongs to the TBP family.

In terms of biological role, general factor that plays a role in the activation of archaeal genes transcribed by RNA polymerase. Binds specifically to the TATA box promoter element which lies close to the position of transcription initiation. The polypeptide is TATA-box-binding protein (Pyrobaculum aerophilum (strain ATCC 51768 / DSM 7523 / JCM 9630 / CIP 104966 / NBRC 100827 / IM2)).